Here is a 211-residue protein sequence, read N- to C-terminus: FMN-dependent NADH:quinone oxidoreductase 2 (211 aa).

17-19 is an FMN binding site; sequence SYS.

This sequence belongs to the azoreductase type 1 family. Homodimer. FMN is required as a cofactor.

The enzyme catalyses 2 a quinone + NADH + H(+) = 2 a 1,4-benzosemiquinone + NAD(+). It catalyses the reaction N,N-dimethyl-1,4-phenylenediamine + anthranilate + 2 NAD(+) = 2-(4-dimethylaminophenyl)diazenylbenzoate + 2 NADH + 2 H(+). Quinone reductase that provides resistance to thiol-specific stress caused by electrophilic quinones. Functionally, also exhibits azoreductase activity. Catalyzes the reductive cleavage of the azo bond in aromatic azo compounds to the corresponding amines. The sequence is that of FMN-dependent NADH:quinone oxidoreductase 2 from Bacillus licheniformis (strain ATCC 14580 / DSM 13 / JCM 2505 / CCUG 7422 / NBRC 12200 / NCIMB 9375 / NCTC 10341 / NRRL NRS-1264 / Gibson 46).